A 561-amino-acid polypeptide reads, in one-letter code: 3-hydroxy-3-methylglutaryl-coenzyme A reductase 3 (561 aa).

2 helical membrane-spanning segments follow: residues 25-45 (PIRHTNLIFSALFAASLAYLM) and 69-89 (IFGLVASLIYLLSFFGIAFVQ). Positions 90 to 145 (SIVSSSDDEEEDFLVGPARGSSAAAAVAPPPPPSSPAQCSLLGSPHDDAARERMPE) are linker. The disordered stretch occupies residues 113 to 146 (AAAVAPPPPPSSPAQCSLLGSPHDDAARERMPEE). The span at 134-143 (PHDDAARERM) shows a compositional bias: basic and acidic residues. Positions 146-561 (EDEEIVSSVV…SSKDMSKVIS (416 aa)) are catalytic. Residue Glu-240 is the Charge relay system of the active site. N-linked (GlcNAc...) asparagine glycosylation is present at Asn-304. Catalysis depends on charge relay system residues Lys-372 and Asp-448. The active-site Proton donor is the His-546. A glycan (N-linked (GlcNAc...) asparagine) is linked at Asn-550.

The protein belongs to the HMG-CoA reductase family.

Its subcellular location is the endoplasmic reticulum membrane. It carries out the reaction (R)-mevalonate + 2 NADP(+) + CoA = (3S)-3-hydroxy-3-methylglutaryl-CoA + 2 NADPH + 2 H(+). The protein operates within metabolic intermediate biosynthesis; (R)-mevalonate biosynthesis; (R)-mevalonate from acetyl-CoA: step 3/3. Functionally, catalyzes the synthesis of mevalonate. The specific precursor of all isoprenoid compounds present in plants. This Oryza sativa subsp. japonica (Rice) protein is 3-hydroxy-3-methylglutaryl-coenzyme A reductase 3 (HMG3).